Here is a 208-residue protein sequence, read N- to C-terminus: Ribosome maturation factor RimM (208 aa).

Residues 98–205 (ADEFYVPDLI…IIEITPPDGL (108 aa)) form the PRC barrel domain. The interval 154–174 (LPSKSKRSRDTKNQKKNQSPP) is disordered.

This sequence belongs to the RimM family. In terms of assembly, binds ribosomal protein uS19.

It is found in the cytoplasm. An accessory protein needed during the final step in the assembly of 30S ribosomal subunit, possibly for assembly of the head region. Essential for efficient processing of 16S rRNA. May be needed both before and after RbfA during the maturation of 16S rRNA. It has affinity for free ribosomal 30S subunits but not for 70S ribosomes. The chain is Ribosome maturation factor RimM from Trichodesmium erythraeum (strain IMS101).